A 148-amino-acid polypeptide reads, in one-letter code: UPF0591 membrane protein C15E1.02c (148 aa).

3 helical membrane-spanning segments follow: residues 14 to 34 (AILL…GPLM), 80 to 102 (LLQL…VFGA), and 122 to 142 (ILVK…ALIG).

It belongs to the UPF0591 family.

The protein resides in the membrane. This is UPF0591 membrane protein C15E1.02c from Schizosaccharomyces pombe (strain 972 / ATCC 24843) (Fission yeast).